The primary structure comprises 234 residues: UDP-2,3-diacylglucosamine hydrolase (234 aa).

Mn(2+)-binding residues include Asp9, His11, Asp42, Asn80, and His115. 80 to 81 (NR) contacts substrate. Positions 123, 161, 165, 168, and 196 each coordinate substrate. Mn(2+) is bound by residues His196 and His198.

The protein belongs to the LpxH family. The cofactor is Mn(2+).

The protein resides in the cell inner membrane. The enzyme catalyses UDP-2-N,3-O-bis[(3R)-3-hydroxytetradecanoyl]-alpha-D-glucosamine + H2O = 2-N,3-O-bis[(3R)-3-hydroxytetradecanoyl]-alpha-D-glucosaminyl 1-phosphate + UMP + 2 H(+). It participates in glycolipid biosynthesis; lipid IV(A) biosynthesis; lipid IV(A) from (3R)-3-hydroxytetradecanoyl-[acyl-carrier-protein] and UDP-N-acetyl-alpha-D-glucosamine: step 4/6. Its function is as follows. Hydrolyzes the pyrophosphate bond of UDP-2,3-diacylglucosamine to yield 2,3-diacylglucosamine 1-phosphate (lipid X) and UMP by catalyzing the attack of water at the alpha-P atom. Involved in the biosynthesis of lipid A, a phosphorylated glycolipid that anchors the lipopolysaccharide to the outer membrane of the cell. The protein is UDP-2,3-diacylglucosamine hydrolase of Histophilus somni (strain 129Pt) (Haemophilus somnus).